The following is a 342-amino-acid chain: MPILRSVAAVLAPFTSDTYMNTADSIFVITVTILTSIGFLLNLLLLYLIIWKSPRNLTPYRIFLANTTITQLVYALFAVTSMPRVLAKHQYTIVIYLGPVQFFGEWFSYMSYVGILHLSLNSFISLMLSMIYRYFSIRFKRFTANTSIILCIIGYFFPFLIFASCSNIAISSSLSFNTAVLDGMVENLESYHMVLTTEISNHPSLIILTLAVTCGLVPIYFVMYWCRHQIHKTLKQTRSVHSPSTRDNARRLVRALTIQSIIPLVSVFPASIFWCLSQLGFVEPTMYSYFIIPCLSLGCIADPVVTIRCVLPYRRWILKLCNMSTTDMITSNQDKSTIFQKH.

Transmembrane regions (helical) follow at residues 26–46 (IFVI…LLLL), 62–82 (IFLA…VTSM), 112–132 (YVGI…SMIY), 148–168 (IILC…CSNI), 205–225 (LIIL…VMYW), 261–281 (IIPL…QLGF), and 287–307 (YSYF…VVTI).

Belongs to the nematode receptor-like protein srd family.

It is found in the membrane. This chain is Serpentine receptor class delta-33 (srd-33), found in Caenorhabditis elegans.